The sequence spans 543 residues: CTP synthase (543 aa).

An amidoligase domain region spans residues 1–267 (MTKYVFVTGG…ATQVLNLLNL (267 aa)). Serine 13 provides a ligand contact to CTP. A UTP-binding site is contributed by serine 13. ATP-binding positions include 14-19 (SIGKGI) and aspartate 71. 2 residues coordinate Mg(2+): aspartate 71 and glutamate 141. CTP contacts are provided by residues 148-150 (DIE), 188-193 (KTKPTQ), and lysine 224. UTP contacts are provided by residues 188-193 (KTKPTQ) and lysine 224. One can recognise a Glutamine amidotransferase type-1 domain in the interval 292-534 (EVAIVGKYVR…LAAAAKNSNR (243 aa)). Glycine 354 is an L-glutamine binding site. Cysteine 381 (nucleophile; for glutamine hydrolysis) is an active-site residue. L-glutamine contacts are provided by residues 382-385 (LGMQ), glutamate 405, and arginine 462. Catalysis depends on residues histidine 507 and glutamate 509.

Belongs to the CTP synthase family. As to quaternary structure, homotetramer.

The enzyme catalyses UTP + L-glutamine + ATP + H2O = CTP + L-glutamate + ADP + phosphate + 2 H(+). The catalysed reaction is L-glutamine + H2O = L-glutamate + NH4(+). It carries out the reaction UTP + NH4(+) + ATP = CTP + ADP + phosphate + 2 H(+). It functions in the pathway pyrimidine metabolism; CTP biosynthesis via de novo pathway; CTP from UDP: step 2/2. Its activity is regulated as follows. Allosterically activated by GTP, when glutamine is the substrate; GTP has no effect on the reaction when ammonia is the substrate. The allosteric effector GTP functions by stabilizing the protein conformation that binds the tetrahedral intermediate(s) formed during glutamine hydrolysis. Inhibited by the product CTP, via allosteric rather than competitive inhibition. Functionally, catalyzes the ATP-dependent amination of UTP to CTP with either L-glutamine or ammonia as the source of nitrogen. Regulates intracellular CTP levels through interactions with the four ribonucleotide triphosphates. The chain is CTP synthase from Thermosynechococcus vestitus (strain NIES-2133 / IAM M-273 / BP-1).